The chain runs to 147 residues: Phosphoribosyl-AMP cyclohydrolase (147 aa).

Asp97 provides a ligand contact to Mg(2+). Zn(2+) is bound at residue Cys98. Asp99 and Asp101 together coordinate Mg(2+). Positions 114 and 121 each coordinate Zn(2+).

It belongs to the PRA-CH family. As to quaternary structure, homodimer. The cofactor is Mg(2+). Zn(2+) is required as a cofactor.

Its subcellular location is the cytoplasm. The enzyme catalyses 1-(5-phospho-beta-D-ribosyl)-5'-AMP + H2O = 1-(5-phospho-beta-D-ribosyl)-5-[(5-phospho-beta-D-ribosylamino)methylideneamino]imidazole-4-carboxamide. It functions in the pathway amino-acid biosynthesis; L-histidine biosynthesis; L-histidine from 5-phospho-alpha-D-ribose 1-diphosphate: step 3/9. Catalyzes the hydrolysis of the adenine ring of phosphoribosyl-AMP. The chain is Phosphoribosyl-AMP cyclohydrolase from Hydrogenovibrio crunogenus (strain DSM 25203 / XCL-2) (Thiomicrospira crunogena).